Reading from the N-terminus, the 444-residue chain is Tol-Pal system protein TolB (444 aa).

The N-terminal stretch at 1-26 (MTLFRTLAPMGLALALLLPAAVPAAA) is a signal peptide. A compositionally biased stretch (polar residues) spans 281-310 (IYTLDTGSGTRRQLTNSPSIETAPSYSPDG). The tract at residues 281–311 (IYTLDTGSGTRRQLTNSPSIETAPSYSPDGS) is disordered.

Belongs to the TolB family. In terms of assembly, the Tol-Pal system is composed of five core proteins: the inner membrane proteins TolA, TolQ and TolR, the periplasmic protein TolB and the outer membrane protein Pal. They form a network linking the inner and outer membranes and the peptidoglycan layer.

The protein resides in the periplasm. Its function is as follows. Part of the Tol-Pal system, which plays a role in outer membrane invagination during cell division and is important for maintaining outer membrane integrity. The sequence is that of Tol-Pal system protein TolB from Cereibacter sphaeroides (strain ATCC 17029 / ATH 2.4.9) (Rhodobacter sphaeroides).